The following is a 317-amino-acid chain: Probable cell division protein WhiA (317 aa).

A DNA-binding region (H-T-H motif) is located at residues 281-314 (TLKELGEMINPPIGKSGVNHRLRKLDQIADRERG).

Belongs to the WhiA family.

Involved in cell division and chromosome segregation. This chain is Probable cell division protein WhiA, found in Alkaliphilus metalliredigens (strain QYMF).